A 390-amino-acid polypeptide reads, in one-letter code: Probable inactive secreted aspartyl protease (390 aa).

Positions 1–20 (MQLTIKALVGILTTISAATA) are cleaved as a signal peptide. A propeptide spans 21–69 (VSFDMENLGAEKRGVSGEELHMLHGNEVLARFANGVYPEVANGTRVSKR) (removed in mature form). A glycan (N-linked (GlcNAc...) asparagine) is linked at asparagine 62. Residues 86–388 (WAVKAKIGSN…KFDSNEMQIA (303 aa)) form the Peptidase A1 domain. Active-site residues include aspartate 104 and aspartate 273. The cysteines at positions 313 and 346 are disulfide-linked.

This sequence belongs to the peptidase A1 family.

The protein resides in the secreted. In terms of biological role, probable inactive secreted aspartyl protease. May promote an inflammatory immune response in the host when the host skin barrier is breached. Has no detectable protease activity in vitro on fluorogenic substrates, a peptide library, or with the general protease substrate casein. The presence of the enzyme also does not affect the activity of the secreted aspartyl protease SAP1. This chain is Probable inactive secreted aspartyl protease, found in Malassezia globosa (strain ATCC MYA-4612 / CBS 7966) (Dandruff-associated fungus).